The following is a 223-amino-acid chain: Cytidylate kinase (223 aa).

10–18 (GPAGAGKST) is a binding site for ATP.

It belongs to the cytidylate kinase family. Type 1 subfamily.

The protein localises to the cytoplasm. It catalyses the reaction CMP + ATP = CDP + ADP. The enzyme catalyses dCMP + ATP = dCDP + ADP. This chain is Cytidylate kinase, found in Exiguobacterium sibiricum (strain DSM 17290 / CCUG 55495 / CIP 109462 / JCM 13490 / 255-15).